A 507-amino-acid chain; its full sequence is ATP synthase subunit alpha, chloroplastic (507 aa).

170–177 (GDRQTGKT) provides a ligand contact to ATP.

Belongs to the ATPase alpha/beta chains family. In terms of assembly, F-type ATPases have 2 components, CF(1) - the catalytic core - and CF(0) - the membrane proton channel. CF(1) has five subunits: alpha(3), beta(3), gamma(1), delta(1), epsilon(1). CF(0) has four main subunits: a, b, b' and c.

It is found in the plastid. The protein localises to the chloroplast thylakoid membrane. It carries out the reaction ATP + H2O + 4 H(+)(in) = ADP + phosphate + 5 H(+)(out). In terms of biological role, produces ATP from ADP in the presence of a proton gradient across the membrane. The alpha chain is a regulatory subunit. This chain is ATP synthase subunit alpha, chloroplastic, found in Tetradesmus obliquus (Green alga).